Here is a 138-residue protein sequence, read N- to C-terminus: Basic phospholipase A2 RV-4 (138 aa).

An N-terminal signal peptide occupies residues 1-16 (MRTLWIVAVCLIGVEG). Intrachain disulfides connect cysteine 42-cysteine 131, cysteine 44-cysteine 60, cysteine 59-cysteine 111, cysteine 65-cysteine 138, cysteine 66-cysteine 104, cysteine 73-cysteine 97, and cysteine 91-cysteine 102. The Ca(2+) site is built by tyrosine 43, glycine 45, and glycine 47. Histidine 63 is an active-site residue. A Ca(2+)-binding site is contributed by aspartate 64. The active site involves aspartate 105.

It belongs to the phospholipase A2 family. Group II subfamily. D49 sub-subfamily. Heterodimer of a weakly toxic basic protein having phospholipase A2 activity (RV-4) and a non-toxic acidic protein which inhibits its enzymatic activity but potentiates its lethal potency and neurotoxicity (RV-7). Ca(2+) is required as a cofactor. In terms of tissue distribution, expressed by the venom gland.

It is found in the secreted. It catalyses the reaction a 1,2-diacyl-sn-glycero-3-phosphocholine + H2O = a 1-acyl-sn-glycero-3-phosphocholine + a fatty acid + H(+). Functionally, heterodimer RV-4/RV-7: acts as a presynaptic neurotoxin. Monomer: snake venom phospholipase A2 (PLA2) that acts as a presynaptic neurotoxin. PLA2 catalyzes the calcium-dependent hydrolysis of the 2-acyl groups in 3-sn-phosphoglycerides. This Daboia siamensis (Eastern Russel's viper) protein is Basic phospholipase A2 RV-4.